A 313-amino-acid polypeptide reads, in one-letter code: ADP-L-glycero-D-manno-heptose-6-epimerase (313 aa).

Residues 10-11, 31-32, R38, K53, 75-79, and N92 contribute to the NADP(+) site; these read FI, DD, and EGACS. The Proton acceptor role is filled by Y139. K143 lines the NADP(+) pocket. N168 lines the substrate pocket. V169 and K177 together coordinate NADP(+). K177 (proton acceptor) is an active-site residue. Residues K179, H186, 200–203, R213, and Y277 contribute to the substrate site; that span reads FEGW.

The protein belongs to the NAD(P)-dependent epimerase/dehydratase family. HldD subfamily. In terms of assembly, homopentamer. It depends on NADP(+) as a cofactor.

It catalyses the reaction ADP-D-glycero-beta-D-manno-heptose = ADP-L-glycero-beta-D-manno-heptose. It functions in the pathway nucleotide-sugar biosynthesis; ADP-L-glycero-beta-D-manno-heptose biosynthesis; ADP-L-glycero-beta-D-manno-heptose from D-glycero-beta-D-manno-heptose 7-phosphate: step 4/4. Its function is as follows. Catalyzes the interconversion between ADP-D-glycero-beta-D-manno-heptose and ADP-L-glycero-beta-D-manno-heptose via an epimerization at carbon 6 of the heptose. This chain is ADP-L-glycero-D-manno-heptose-6-epimerase, found in Marinobacter nauticus (strain ATCC 700491 / DSM 11845 / VT8) (Marinobacter aquaeolei).